Here is a 215-residue protein sequence, read N- to C-terminus: Secretory component protein psh3 (215 aa).

The Cytoplasmic segment spans residues 1–21; sequence MAKRSIFRFADEKGLKVAARY. A helical membrane pass occupies residues 22–42; it reads GVLMSTSFIFALLFHSSVADV. Residues 43-67 lie on the Extracellular side of the membrane; sequence NTLWSPGPESAFDAAETYYTLVAGS. Residues 68–88 traverse the membrane as a helical segment; that stretch reads HFIVKYTVYTIMGLNMIFHLI. The Cytoplasmic segment spans residues 89 to 105; it reads QATGAKGDDKLFFYSST. The chain crosses the membrane as a helical span at residues 106-126; that stretch reads LLYLTALILFIVNVAPSMLVV. The Extracellular segment spans residues 127–147; it reads KLQNYVQFPRNMHLSVLAASH. A helical transmembrane segment spans residues 148–168; that stretch reads VLVEFLLAGVILIQLGYVFGY. The Cytoplasmic portion of the chain corresponds to 169-215; it reads HVQSIQQREYAEDMREQELAEKAKLESESATTQSVETVSTESVSKRK. Residues 190 to 215 form a disordered region; the sequence is KAKLESESATTQSVETVSTESVSKRK. Low complexity predominate over residues 196-215; sequence ESATTQSVETVSTESVSKRK.

To yeast SHR3. As to quaternary structure, monomer.

It is found in the endoplasmic reticulum membrane. Involved in amino acid permease processing and required for the efficient translocation of structurally related amino acid permeases from the endoplasmic reticulum to the plasma membrane. In Schizosaccharomyces pombe (strain 972 / ATCC 24843) (Fission yeast), this protein is Secretory component protein psh3 (psh3).